The following is a 392-amino-acid chain: 23S rRNA (uracil(747)-C(5))-methyltransferase RlmC (392 aa).

[4Fe-4S] cluster-binding residues include Cys-4, Cys-12, Cys-15, and Cys-93. Residues Gln-218, Phe-247, Glu-275, and Asn-321 each contribute to the S-adenosyl-L-methionine site. Catalysis depends on Cys-348, which acts as the Nucleophile.

Belongs to the class I-like SAM-binding methyltransferase superfamily. RNA M5U methyltransferase family. RlmC subfamily.

The enzyme catalyses uridine(747) in 23S rRNA + S-adenosyl-L-methionine = 5-methyluridine(747) in 23S rRNA + S-adenosyl-L-homocysteine + H(+). Catalyzes the formation of 5-methyl-uridine at position 747 (m5U747) in 23S rRNA. This chain is 23S rRNA (uracil(747)-C(5))-methyltransferase RlmC, found in Haemophilus influenzae (strain ATCC 51907 / DSM 11121 / KW20 / Rd).